We begin with the raw amino-acid sequence, 325 residues long: MAQYKGTMREAGRAMHLLKKRERQREQMEVLKQRIAEETILKSQVDKRFSAHYDAVEAELKSSTVGLVTLNDMKARQEALVRERERQLAKRQHLEEQRLQQERQREQEQRRERKRKISCLSFALDDLDDQADAAEARRAGNLGKNPDVDTSFLPDRDREEEENRLREELRQEWEAQREKVKDEEMEVTFSYWDGSGHRRTVRVRKGNTVQQFLKKALQGLRKDFLELRSAGVEQLMFIKEDLILPHYHTFYDFIIARARGKSGPLFSFDVHDDVRLLSDATMEKDESHAGKVVLRSWYEKNKHIFPASRWEAYDPEKKWDKYTIR.

A2 carries the N-acetylalanine modification. 2 disordered regions span residues Q92–R111 and R137–E160.

It belongs to the FAM50 family. As to expression, widely expressed. Mostly abundant in testis and adult and fetal brain.

This Homo sapiens (Human) protein is Protein FAM50B (FAM50B).